A 320-amino-acid chain; its full sequence is cUMP-AMP-activated phospholipase (320 aa).

The PNPLA domain occupies 23–204 (LALDGGGAKG…CANNPTLFAI (182 aa)). Positions 27 to 32 (GGGAKG) match the GXGXXG motif. The short motif at 59–63 (GTSTG) is the GXSXG element. Catalysis depends on serine 61, which acts as the Nucleophile. The Proton acceptor role is filled by aspartate 191. A DGA/G motif is present at residues 191–193 (DGG).

Belongs to the patatin family.

It carries out the reaction a 1,2-diacyl-sn-glycero-3-phosphocholine + H2O = a 2-acyl-sn-glycero-3-phosphocholine + a fatty acid + H(+). Phospholipase activity is specifically activated upon 3',3'-cUAMP binding. Is not activated by the other cyclic dinucleotides 3',3'-cGAMP, 3',3'-c-diAMP and 3',3'-c-diGMP. Therefore, is specifically activated by only the nucleotide synthesized from its adjacently encoded nucleotidyltransferase (CdnE). Its function is as follows. Effector phospholipase of a CBASS antivirus system. CBASS (cyclic oligonucleotide-based antiphage signaling system) provides immunity against bacteriophage. The CD-NTase protein synthesizes cyclic nucleotides in response to infection; these serve as specific second messenger signals. The signals activate a diverse range of effectors, leading to bacterial cell death and thus abortive phage infection. A type II-A(UA) CBASS system. In terms of biological role, phospholipase that is activated upon binding to the cyclic dinucleotide (CDN) second messenger 3',3'-cyclic UMP-AMP (3',3'-cUAMP). In Escherichia coli, this protein is cUMP-AMP-activated phospholipase.